A 795-amino-acid chain; its full sequence is Copper-exporting P-type ATPase (795 aa).

HMA domains are found at residues 5–70 (QNAT…YDVV) and 72–138 (DKAE…YDAQ). Cu(+)-binding residues include C16, C19, C83, and C86. A run of 6 helical transmembrane segments spans residues 161–181 (LMISTILSLPLLMTMLVHLFN), 187–207 (ILMNPWFQFILATPIQFIIGW), 224–244 (MDVLVALGTSAAYFYSIYEMI), 256–276 (LYFETSAVLITLILFGKYLEA), 412–432 (YFVPIVIAIALLTFLIWITLV), and 440–460 (ALVAAISVLVIACPCALGLAT). D496 acts as the 4-aspartylphosphate intermediate in catalysis. D690 and D694 together coordinate Mg(2+). 2 consecutive transmembrane segments (helical) span residues 747–764 (NLFWAFGYNIAGIPIAAM) and 770–788 (WIAGAAMALSSVSVVSNAL).

The protein belongs to the cation transport ATPase (P-type) (TC 3.A.3) family. Type IB subfamily.

It is found in the cell membrane. It catalyses the reaction Cu(+)(in) + ATP + H2O = Cu(+)(out) + ADP + phosphate + H(+). In terms of biological role, involved in copper export. The protein is Copper-exporting P-type ATPase (copA) of Staphylococcus haemolyticus (strain JCSC1435).